Here is a 403-residue protein sequence, read N- to C-terminus: Ribosomal RNA large subunit methyltransferase I (403 aa).

Residues 9–88 form the PUA domain; that stretch reads YPRLVLSKGR…ESIDIAFFTR (80 aa).

This sequence belongs to the methyltransferase superfamily. RlmI family.

The protein resides in the cytoplasm. The enzyme catalyses cytidine(1962) in 23S rRNA + S-adenosyl-L-methionine = 5-methylcytidine(1962) in 23S rRNA + S-adenosyl-L-homocysteine + H(+). Specifically methylates the cytosine at position 1962 (m5C1962) of 23S rRNA. This Salmonella choleraesuis (strain SC-B67) protein is Ribosomal RNA large subunit methyltransferase I.